We begin with the raw amino-acid sequence, 356 residues long: Peritrophin-44 (356 aa).

Positions 1 to 23 are cleaved as a signal peptide; the sequence is MKELQITTGCLLLMVAAIGKTSA. 5 Chitin-binding type-2 domains span residues 28–85, 88–146, 147–201, 220–283, and 286–355; these read SETC…KCIS, KNAC…ECTA, DSIC…PCLA, NFVC…PCTF, and CGNL…YKLC. An intrachain disulfide couples Cys-62 to Cys-75. N-linked (GlcNAc...) asparagine glycosylation occurs at Asn-114. 3 disulfide bridges follow: Cys-122–Cys-135, Cys-181–Cys-193, and Cys-262–Cys-273. The N-linked (GlcNAc...) asparagine glycan is linked to Asn-309.

Post-translationally, glycosylated. In terms of tissue distribution, larval peritrophic membrane.

May have roles in the maintenance of peritrophic membrane structure and in the determination of the porosity of the peritrophic membrane. May bind chitin or related oligosaccharide structures. The polypeptide is Peritrophin-44 (Lucilia cuprina (Green bottle fly)).